A 257-amino-acid chain; its full sequence is Probable enoyl-CoA hydratase (257 aa).

Belongs to the enoyl-CoA hydratase/isomerase family.

The enzyme catalyses a (3S)-3-hydroxyacyl-CoA = a (2E)-enoyl-CoA + H2O. It carries out the reaction a 4-saturated-(3S)-3-hydroxyacyl-CoA = a (3E)-enoyl-CoA + H2O. Its function is as follows. Could possibly oxidize fatty acids using specific components. The protein is Probable enoyl-CoA hydratase (fadB1) of Rhodobacter capsulatus (strain ATCC BAA-309 / NBRC 16581 / SB1003).